A 335-amino-acid polypeptide reads, in one-letter code: MGEKATPAVYKRYICSFADCSASYNKNWKLQAHLCKHTGERPFPCTVEGCGKGFVTLFHLTRHSMTHTGEKPCKCDAPDCDLSFTTMTNLRKHYQRAHLSPSLIYECYFADCGQTFKKHNQLKLHQYIHTNQQPFKCNHEGCDKSFSSPSRLKRHEKVHAGYPCQKDSSCSFVGKTWTEYMKHLAASHSEPTICDVCNRKFKNKTHLKDHKRTHEVERVVYKCPRDGCDRTYTKKFGLQSHILSFHEDSRPFACGHPGCGKTFAMKQSLDRHANTHDPEKKKMKKPRPKKSLASRLSGYNPKKLSKTPKSASELGKLPPDGPPDTATAMQNLSIK.

9 C2H2-type zinc fingers span residues 13–37, 43–67, 73–98, 105–129, 135–159, 162–188, 192–214, 221–246, and 252–276; these read YICS…LCKH, FPCT…SMTH, CKCD…QRAH, YECY…QYIH, FKCN…EKVH, YPCQ…AASH, TICD…KRTH, YKCP…LSFH, and FACG…ANTH. Over residues 269 to 280 the composition is skewed to basic and acidic residues; the sequence is LDRHANTHDPEK. The segment at 269-335 is disordered; the sequence is LDRHANTHDP…ATAMQNLSIK (67 aa). Basic residues predominate over residues 281–292; that stretch reads KKMKKPRPKKSL.

The protein localises to the nucleus. Its function is as follows. Involved in ribosomal large subunit biogenesis. Interacts with the internal control region (ICR) of approximately 50 bases within the 5S RNA genes, is required for correct transcription of these genes by RNA polymerase III. Also binds the transcribed 5S RNA's. The chain is Transcription factor IIIA (gtf3a) from Lithobates pipiens (Northern leopard frog).